The following is a 294-amino-acid chain: Endonuclease 3 (294 aa).

An N-terminal signal peptide occupies residues 1 to 24 (MGWSLRMWIVSILVLTQLVNGALC). The a divalent metal cation site is built by Trp25 and His30. Position 25–30 (25–30 (WGDAGH)) interacts with substrate. Cys34 and Cys65 are oxidised to a cystine. Positions 69 and 84 each coordinate a divalent metal cation. Substrate-binding positions include 69-75 (DEIKKLP), 84-87 (HFAD), and 94-99 (NYEYSR). 3 cysteine pairs are disulfide-bonded: Cys93–Cys241, Cys101–Cys106, and Cys221–Cys228. Residues Asn113 and Tyr131 each coordinate substrate. N-linked (GlcNAc...) asparagine glycosylation occurs at Asn113. Asn132 carries an N-linked (GlcNAc...) asparagine glycan. The a divalent metal cation site is built by His142, Asp146, His152, His176, and Asp180. The segment at 142–191 (HYMGDIHQPLHEGFIGDLGGNKIKVHWYNQETNLHRVWDDMIIESALETY) is substrate binding. 3 N-linked (GlcNAc...) asparagine glycosylation sites follow: Asn193, Asn224, and Asn247. The propeptide at 279 to 294 (GTLNRIFSAKRKLARA) is removed in mature form.

Belongs to the nuclease type I family. In terms of assembly, monomer. Requires Zn(2+) as cofactor. Mn(2+) serves as cofactor.

It carries out the reaction Endonucleolytic cleavage to 5'-phosphomononucleotide and 5'-phosphooligonucleotide end-products.. Functionally, endonuclease that can use RNA and single-stranded DNA as substrates. In contradiction with PubMed:23620482, cannot hydrolyze single-stranded DNA and does not cleave mismatches. This chain is Endonuclease 3, found in Arabidopsis thaliana (Mouse-ear cress).